The primary structure comprises 468 residues: 6-phospho-beta-galactosidase (468 aa).

Residues glutamine 19, histidine 116, asparagine 159, glutamate 160, and asparagine 297 each coordinate D-galactose 6-phosphate. Glutamate 160 (proton donor) is an active-site residue. Catalysis depends on glutamate 375, which acts as the Nucleophile. D-galactose 6-phosphate-binding residues include serine 428, tryptophan 429, lysine 435, and tyrosine 437.

Belongs to the glycosyl hydrolase 1 family.

The catalysed reaction is a 6-phospho-beta-D-galactoside + H2O = D-galactose 6-phosphate + an alcohol. The protein operates within carbohydrate metabolism; lactose degradation; D-galactose 6-phosphate and beta-D-glucose from lactose 6-phosphate: step 1/1. This chain is 6-phospho-beta-galactosidase, found in Streptococcus pyogenes serotype M12 (strain MGAS2096).